Consider the following 229-residue polypeptide: Glycine betaine/carnitine/choline transport system permease protein OpuCD (229 aa).

The 181-residue stretch at 22–202 (FYRHFLMSVY…LMAVIADLVM (181 aa)) folds into the ABC transmembrane type-1 domain. The next 5 helical transmembrane spans lie at 27 to 47 (LMSVYGVLFAAIVGIPLGILI), 55 to 74 (GWVFAVTNVIQTIPALAMLA), 78 to 100 (LVMGLGANTVILSLFLYSLLPII), 148 to 168 (ALVIAIGITAIGTFVGAGGLG), and 182 to 202 (AIILAGAIPTALMAVIADLVM).

It belongs to the binding-protein-dependent transport system permease family. CysTW subfamily. As to quaternary structure, the complex is composed of two ATP-binding proteins (OpuCA), two transmembrane proteins (OpuCB and OpuCD) and a solute-binding protein (OpuCC).

It localises to the cell membrane. Involved in a high affinity multicomponent binding-protein-dependent transport system for glycine betaine, carnitine and choline; probably responsible for the translocation of the substrate across the membrane. In Bacillus subtilis (strain 168), this protein is Glycine betaine/carnitine/choline transport system permease protein OpuCD (opuCD).